Reading from the N-terminus, the 213-residue chain is General transcription factor 3C polypeptide 6 (213 aa).

Residues 1–11 (MAAAADERSPE) are compositionally biased toward basic and acidic residues. Disordered regions lie at residues 1-20 (MAAAADERSPEDGEDEEEEE) and 191-213 (SGPLIDIPSETEGSVFMETQMLP). At alanine 2 the chain carries N-acetylalanine. Serine 9 carries the phosphoserine modification.

The protein belongs to the TFIIIC subunit 6 family. As to quaternary structure, part of the TFIIIC subcomplex TFIIIC2, consisting of six subunits, GTF3C1, GTF3C2, GTF3C3, GTF3C4, GTF3C5 and GTF3C6. Interacts with GTF3C4 and GTF3C5.

It is found in the nucleus. Its function is as follows. Involved in RNA polymerase III-mediated transcription. Integral, tightly associated component of the DNA-binding TFIIIC2 subcomplex that directly binds tRNA and virus-associated RNA promoters. This is General transcription factor 3C polypeptide 6 (GTF3C6) from Homo sapiens (Human).